The primary structure comprises 86 residues: Cell division topological specificity factor (86 aa).

It belongs to the MinE family.

Functionally, prevents the cell division inhibition by proteins MinC and MinD at internal division sites while permitting inhibition at polar sites. This ensures cell division at the proper site by restricting the formation of a division septum at the midpoint of the long axis of the cell. The polypeptide is Cell division topological specificity factor (Shewanella pealeana (strain ATCC 700345 / ANG-SQ1)).